The chain runs to 219 residues: NADH-quinone oxidoreductase subunit C (219 aa).

The protein belongs to the complex I 30 kDa subunit family. In terms of assembly, NDH-1 is composed of 14 different subunits. Subunits NuoB, C, D, E, F, and G constitute the peripheral sector of the complex.

The protein localises to the cell inner membrane. It carries out the reaction a quinone + NADH + 5 H(+)(in) = a quinol + NAD(+) + 4 H(+)(out). NDH-1 shuttles electrons from NADH, via FMN and iron-sulfur (Fe-S) centers, to quinones in the respiratory chain. The immediate electron acceptor for the enzyme in this species is believed to be ubiquinone. Couples the redox reaction to proton translocation (for every two electrons transferred, four hydrogen ions are translocated across the cytoplasmic membrane), and thus conserves the redox energy in a proton gradient. This Methylorubrum extorquens (strain PA1) (Methylobacterium extorquens) protein is NADH-quinone oxidoreductase subunit C.